Here is a 202-residue protein sequence, read N- to C-terminus: Putative scarecrow-like protein 16 (202 aa).

The VHIID stretch occupies residues 1-26 (MQIPTLIDSMANKLHKKPPPLLKLTV). The region spanning 1–202 (MQIPTLIDSM…RVERLEPKSR (202 aa)) is the GRAS domain. Residues 45–82 (ELGSKLVNFATTRNVAMEFRIISSSYSDGLSSLIEQLR) form a leucine repeat II (LRII) region. Positions 92-184 (LVVNCHMMLH…EADISWKIDN (93 aa)) are PFYRE. The interval 187-202 (AKEGAERVERLEPKSR) is SAW.

Belongs to the GRAS family. As to expression, expressed in seedlings, leaves and flowers.

It is found in the nucleus. Its function is as follows. Probable transcription factor involved in plant development. The polypeptide is Putative scarecrow-like protein 16 (SCL16) (Arabidopsis thaliana (Mouse-ear cress)).